Consider the following 38-residue polypeptide: MKVYSSIKKRCEHCRIIKRKGKRYVICKVNPSHKQRQG.

The protein belongs to the bacterial ribosomal protein bL36 family.

This is Large ribosomal subunit protein bL36 from Chlorobaculum parvum (strain DSM 263 / NCIMB 8327) (Chlorobium vibrioforme subsp. thiosulfatophilum).